The chain runs to 333 residues: Beta-ketoacyl-[acyl-carrier-protein] synthase III (333 aa).

Active-site residues include Cys-116 and His-258. An ACP-binding region spans residues 259–263; the sequence is QANKR. Asn-288 is a catalytic residue.

This sequence belongs to the thiolase-like superfamily. FabH family. Homodimer.

Its subcellular location is the cytoplasm. It carries out the reaction malonyl-[ACP] + acetyl-CoA + H(+) = 3-oxobutanoyl-[ACP] + CO2 + CoA. It functions in the pathway lipid metabolism; fatty acid biosynthesis. Its function is as follows. Catalyzes the condensation reaction of fatty acid synthesis by the addition to an acyl acceptor of two carbons from malonyl-ACP. Catalyzes the first condensation reaction which initiates fatty acid synthesis and may therefore play a role in governing the total rate of fatty acid production. Possesses both acetoacetyl-ACP synthase and acetyl transacylase activities. Its substrate specificity determines the biosynthesis of branched-chain and/or straight-chain of fatty acids. In Koribacter versatilis (strain Ellin345), this protein is Beta-ketoacyl-[acyl-carrier-protein] synthase III.